Consider the following 67-residue polypeptide: Disintegrin EC3A (67 aa).

The Disintegrin domain occupies 1-65 (NSVHPCCDPV…DCPRNRYKGK (65 aa)). 4 disulfides stabilise this stretch: Cys6-Cys29, Cys20-Cys26, Cys25-Cys50, and Cys38-Cys57. Positions 42–44 (VGD) match the Cell attachment site; atypical (VGD) motif.

The protein belongs to the venom metalloproteinase (M12B) family. P-II subfamily. P-IIe sub-subfamily. As to quaternary structure, heterodimer with EC3B; disulfide-linked. Expressed by the venom gland.

The protein localises to the secreted. Inhibits adhesion of cells expressing alpha-4/beta-1 (ITGA4/ITGB1) and alpha-4/beta-7 (ITGA4/ITGB7) integrins to the natural ligands vascular cell adhesion molecule 1 (VCAM-1) and mucosal addressin cell adhesion molecule 1 (MADCAM-1). It is also a weaker inhibitor of alpha-5/beta-1 (ITGA5/ITGB1) and alpha-2b/beta-3 (ITGA2B/ITGB3) integrins. The inhibitory activity of EC3 towards alpha-4 integrins is associated with the MLD sequence of EC3B subunit. The ability of EC3 to inhibit ITGA5/ITGB1 resides in both subunits A and B. This Echis carinatus (Saw-scaled viper) protein is Disintegrin EC3A.